A 357-amino-acid polypeptide reads, in one-letter code: Peptide chain release factor 1 (357 aa).

N5-methylglutamine is present on Gln-234. A compositionally biased stretch (basic and acidic residues) spans 284–307 (KKQEQRSNDRKQQVGSGDRSERIR). Residues 284–313 (KKQEQRSNDRKQQVGSGDRSERIRTYNFPQ) are disordered.

This sequence belongs to the prokaryotic/mitochondrial release factor family. Methylated by PrmC. Methylation increases the termination efficiency of RF1.

It localises to the cytoplasm. In terms of biological role, peptide chain release factor 1 directs the termination of translation in response to the peptide chain termination codons UAG and UAA. The sequence is that of Peptide chain release factor 1 from Borrelia hermsii (strain HS1 / DAH).